Here is a 278-residue protein sequence, read N- to C-terminus: ADP-dependent (S)-NAD(P)H-hydrate dehydratase (278 aa).

The region spanning 4 to 276 (DDDLVRQVIR…KAIPSWMKKL (273 aa)) is the YjeF C-terminal domain. (6S)-NADPHX is bound by residues Ala39, Gly102, and His152. Gly216 is an AMP binding site. Asp217 contacts (6S)-NADPHX.

It belongs to the NnrD/CARKD family. In terms of assembly, homotetramer. The cofactor is Mg(2+).

The enzyme catalyses (6S)-NADHX + ADP = AMP + phosphate + NADH + H(+). It carries out the reaction (6S)-NADPHX + ADP = AMP + phosphate + NADPH + H(+). Functionally, catalyzes the dehydration of the S-form of NAD(P)HX at the expense of ADP, which is converted to AMP. Together with NAD(P)HX epimerase, which catalyzes the epimerization of the S- and R-forms, the enzyme allows the repair of both epimers of NAD(P)HX, a damaged form of NAD(P)H that is a result of enzymatic or heat-dependent hydration. This chain is ADP-dependent (S)-NAD(P)H-hydrate dehydratase, found in Streptococcus thermophilus.